The following is a 328-amino-acid chain: Sterol-4-alpha-carboxylate 3-dehydrogenase, decarboxylating (328 aa).

Y145 acts as the Proton acceptor in catalysis. K149 serves as a coordination point for NAD(+). Residues 259 to 279 (LHMVLPTPIALSLVWIMALIW) traverse the membrane as a helical segment.

This sequence belongs to the 3-beta-HSD family. Homodimer.

It localises to the endoplasmic reticulum membrane. The protein localises to the lipid droplet. The catalysed reaction is a 3beta-hydroxysteroid-4alpha-carboxylate + NADP(+) = a 3-oxosteroid + CO2 + NADPH. It carries out the reaction a 3beta-hydroxysteroid-4alpha-carboxylate + NAD(+) = a 3-oxosteroid + CO2 + NADH. It participates in steroid biosynthesis; zymosterol biosynthesis; zymosterol from lanosterol: step 4/6. Its function is as follows. Catalyzes the NAD(P)(+)-dependent oxidative decarboxylation of the C4 methyl groups of 4-alpha-carboxysterols in post-squalene cholesterol biosynthesis. This Dictyostelium discoideum (Social amoeba) protein is Sterol-4-alpha-carboxylate 3-dehydrogenase, decarboxylating (nsdhl).